We begin with the raw amino-acid sequence, 262 residues long: NADPH-dependent 7-cyano-7-deazaguanine reductase (262 aa).

69 to 71 (IES) is a binding site for substrate. Position 71–72 (71–72 (SK)) interacts with NADPH. Cys-170 functions as the Thioimide intermediate in the catalytic mechanism. Asp-177 (proton donor) is an active-site residue. 209–210 (HE) lines the substrate pocket. 238 to 239 (RG) is a binding site for NADPH.

Belongs to the GTP cyclohydrolase I family. QueF type 2 subfamily. As to quaternary structure, homodimer.

It localises to the cytoplasm. It carries out the reaction 7-aminomethyl-7-carbaguanine + 2 NADP(+) = 7-cyano-7-deazaguanine + 2 NADPH + 3 H(+). Its pathway is tRNA modification; tRNA-queuosine biosynthesis. Catalyzes the NADPH-dependent reduction of 7-cyano-7-deazaguanine (preQ0) to 7-aminomethyl-7-deazaguanine (preQ1). This is NADPH-dependent 7-cyano-7-deazaguanine reductase from Buchnera aphidicola subsp. Schizaphis graminum (strain Sg).